The chain runs to 119 residues: Beta-2-microglobulin (119 aa).

An N-terminal signal peptide occupies residues 1–20 (MARFVVVALLVLLSLSGLEA). The region spanning 25-114 (PKIQVYSRHP…VTLSTPKTVK (90 aa)) is the Ig-like C1-type domain. A disulfide bridge connects residues cysteine 45 and cysteine 100.

The protein belongs to the beta-2-microglobulin family. In terms of assembly, heterodimer of an alpha chain and a beta chain. Beta-2-microglobulin is the beta-chain of major histocompatibility complex class I molecules.

The protein localises to the secreted. In terms of biological role, component of the class I major histocompatibility complex (MHC). Involved in the presentation of peptide antigens to the immune system. This is Beta-2-microglobulin (B2M) from Aotus lemurinus (Gray-bellied night monkey).